The primary structure comprises 48 residues: Sperm protamine P1 (48 aa).

It belongs to the protamine P1 family. In terms of tissue distribution, testis.

The protein resides in the nucleus. It is found in the chromosome. In terms of biological role, protamines substitute for histones in the chromatin of sperm during the haploid phase of spermatogenesis. They compact sperm DNA into a highly condensed, stable and inactive complex. This Corynorhinus townsendii (Townsend's big-eared bat) protein is Sperm protamine P1 (PRM1).